We begin with the raw amino-acid sequence, 1409 residues long: DNA-directed RNA polymerase subunit beta' (1409 aa).

The Zn(2+) site is built by Cys70, Cys72, Cys85, and Cys88. Mg(2+) is bound by residues Asp461, Asp463, and Asp465. Zn(2+) contacts are provided by Cys833, Cys907, Cys914, and Cys917. Residues 1389 to 1409 (EPVAQAAESEDVPDVSQQEAA) are disordered.

The protein belongs to the RNA polymerase beta' chain family. As to quaternary structure, the RNAP catalytic core consists of 2 alpha, 1 beta, 1 beta' and 1 omega subunit. When a sigma factor is associated with the core the holoenzyme is formed, which can initiate transcription. Requires Mg(2+) as cofactor. Zn(2+) is required as a cofactor.

It carries out the reaction RNA(n) + a ribonucleoside 5'-triphosphate = RNA(n+1) + diphosphate. Its function is as follows. DNA-dependent RNA polymerase catalyzes the transcription of DNA into RNA using the four ribonucleoside triphosphates as substrates. The protein is DNA-directed RNA polymerase subunit beta' of Pelobacter propionicus (strain DSM 2379 / NBRC 103807 / OttBd1).